We begin with the raw amino-acid sequence, 435 residues long: MSWVQVNLLVRSLSRGWGGLCRPALSGTPFAQVSLQALRGLHCSAATHKDEPWLVPRPPEPQRKPIKVPAMHEDLFKPSGNRERDKASFLNAVRSFGAHNVRKRGHVDFIYLALRKMPEFGVERDLSVYNLLLDVFPKEVFRPRNVIQRIFVHYPRQQECGVAVLEQMERHGVMPSAETEFLLIQIFGRKSYPMLKFLRMKLWFTRFKNINPYPVPRDLPQDPLDLAKLGLRHMEPDLSAKVTVYQMSLPSDSTGMEDPTQPHIVGIQSPDQQAALARHNPSRPVFVEGPFPLWLRNKCVYYHILRADLPPPEEEKVEEIPEEWELYYPQKLDLEYSRSGWDDYEFDVDEVTEGPVFAMCMAGAHDQATLIKWIQGLQETNPTLAQIPVVFRLARSTGELLTTSRLEGQSPPHSPPKGPEEDDETIQAEQQQGQS.

The transit peptide at 1-48 (MSWVQVNLLVRSLSRGWGGLCRPALSGTPFAQVSLQALRGLHCSAATH) directs the protein to the mitochondrion. A Glycyl lysine isopeptide (Lys-Gly) (interchain with G-Cter in ubiquitin) cross-link involves residue Lys372. The tract at residues 401-435 (LTTSRLEGQSPPHSPPKGPEEDDETIQAEQQQGQS) is disordered.

Belongs to the ECSIT family. As to quaternary structure, interacts with MAP3K1, SMAD4 and TRAF6. Interacts with SMAD1 only after BMP4-treatment. Part of the mitochondrial complex I assembly/MCIA complex that comprises at least the core subunits TMEM126B, NDUFAF1, ECSIT and ACAD9 and complement subunits such as COA1 and TMEM186. Interacts with NDUFAF1. Interacts with ACAD9. Interacts with TRIM59. Interacts with TMEM70 and TMEM242. Interacts (when ubiquitinated) with NF-kappa-B subunits RELA and NFKB1. Interacts with RIGI, IFIT1 and MAVS; these interactions promote RLR-mediated type I IFN induction. Interacts with SQSTM1; this interaction inhibits TLR4 signaling via functional regulation of the TRAF6-ECSIT complex. Interacts with cereblon/CRBN; this interaction inhibits the ubiquitination of ECSIT. Post-translationally, ubiquitinated on Lys-372; leading to translocation in the nucleus together with RELA and NFKB1 and expression of NF-kappa-B-dependent genes. Detected in heart, brain, lung, liver, skeletal muscle, kidney and testis. Detected in embryonic mesoderm and epiblast, and in extraembryonic ectoderm.

Its subcellular location is the cytoplasm. It is found in the nucleus. The protein localises to the mitochondrion. In terms of biological role, adapter protein that plays a role in different signaling pathways including TLRs and IL-1 pathways or innate antiviral induction signaling. Plays a role in the activation of NF-kappa-B by forming a signal complex with TRAF6 and TAK1/MAP3K7 to activate TAK1/MAP3K7 leading to activation of IKKs. Once ubiquitinated, interacts with the dissociated RELA and NFKB1 proteins and translocates to the nucleus where it induces NF-kappa-B-dependent gene expression. Plays a role in innate antiviral immune response by bridging the pattern recognition receptors RIGI and MDA5/IFIT1 to the MAVS complex at the mitochondrion. Promotes proteolytic activation of MAP3K1. Involved in the BMP signaling pathway. Required for normal embryonic development. Its function is as follows. As part of the MCIA complex, involved in the assembly of the mitochondrial complex I. This chain is Evolutionarily conserved signaling intermediate in Toll pathway, mitochondrial, found in Mus musculus (Mouse).